The sequence spans 636 residues: Transcription termination factor FttA (636 aa).

The segment at 4–72 (ELELKRIRDE…VVFRWNVDKR (69 aa)) is KHa. Positions 73-140 (KDPAETKDYI…WQPKTIRTPP (68 aa)) are KHb. Positions 181-383 (NIRMNALGGF…LLIEATYGGP (203 aa)) are metallo-beta-lactamase N-terminus. Positions 242, 244, 246, 247, 329, and 352 each coordinate Zn(2+). The segment at 384–577 (QDRIPSRQES…LKVFTLEGFS (194 aa)) is beta-Casp. Residues 578-636 (GHSSRSQISQFLRRIQPRPKVVIVNHGEESKCVSLSTMIHKKLRKSTKSPKNLEVVLLK) form a metallo-beta-lactamase C-terminus region. His-603 contributes to the Zn(2+) binding site.

Belongs to the metallo-beta-lactamase superfamily. RNA-metabolizing metallo-beta-lactamase-like family. FttA subfamily. Homodimer. Interacts with RNA polymerase (RNAP), interacts with the Spt4-Spt5 complex. Requires Zn(2+) as cofactor.

In terms of biological role, terminates transcription on the whole genome. Termination is linked to FttA-mediated RNA cleavage and does not require NTP hydrolysis. Cleaves endonucleolytically at the RNA exit channel of RNA polymerase (RNAP); the 5'-3' exonuclease activity of this protein degrades the nascent RNA released from RNAP. Terminates transcription genome-wide in M.maripaludis. Restores wild-type growth to a strain of Methanococcus maripaludis depleted for this gene at 22 degrees Celsius and prevents transcriptional read-through. Transcription termination is most effective in vivo on RNAs with more than one U4-tract in their 3'-ends. Has endonuclease activity after U-rich tracts in transcription termination sequences. The chain is Transcription termination factor FttA from Lokiarchaeum sp. (strain GC14_75).